The primary structure comprises 67 residues: ATP synthase protein 8 (67 aa).

The chain crosses the membrane as a helical span at residues 8–24; it reads TWFTTVLSTTITLFILM. The residue at position 54 (lysine 54) is an N6-acetyllysine; alternate. At lysine 54 the chain carries N6-succinyllysine; alternate. Lysine 57 bears the N6-acetyllysine mark.

This sequence belongs to the ATPase protein 8 family. As to quaternary structure, F-type ATPases have 2 components, CF(1) - the catalytic core - and CF(0) - the membrane proton channel. Component of an ATP synthase complex composed of ATP5PB, ATP5MC1, ATP5F1E, ATP5PD, ATP5ME, ATP5PF, ATP5MF, MT-ATP6, MT-ATP8, ATP5F1A, ATP5F1B, ATP5F1D, ATP5F1C, ATP5PO, ATP5MG, ATP5MK and ATP5MJ. Interacts with PRICKLE3.

The protein resides in the mitochondrion membrane. Mitochondrial membrane ATP synthase (F(1)F(0) ATP synthase or Complex V) produces ATP from ADP in the presence of a proton gradient across the membrane which is generated by electron transport complexes of the respiratory chain. F-type ATPases consist of two structural domains, F(1) - containing the extramembraneous catalytic core and F(0) - containing the membrane proton channel, linked together by a central stalk and a peripheral stalk. During catalysis, ATP synthesis in the catalytic domain of F(1) is coupled via a rotary mechanism of the central stalk subunits to proton translocation. Part of the complex F(0) domain. Minor subunit located with subunit a in the membrane. The protein is ATP synthase protein 8 (MT-ATP8) of Microtus pennsylvanicus (Meadow vole).